Consider the following 223-residue polypeptide: Pyridoxal phosphate homeostasis protein (223 aa).

At Lys-36 the chain carries N6-(pyridoxal phosphate)lysine.

It belongs to the pyridoxal phosphate-binding protein YggS/PROSC family. Monomer.

Functionally, pyridoxal 5'-phosphate (PLP)-binding protein, which is involved in PLP homeostasis. This Buchnera aphidicola subsp. Baizongia pistaciae (strain Bp) protein is Pyridoxal phosphate homeostasis protein.